A 252-amino-acid chain; its full sequence is F-box/SPRY domain-containing protein 1 (252 aa).

One can recognise an F-box domain in the interval 1 to 48 (MVDPLCNYNVLEAIFSYLELSDLSRCSQVCKSWYHFLNDENSDVWRWH). The 193-residue stretch at 58–250 (IKSDLLASVT…VSMVYLGTPL (193 aa)) folds into the B30.2/SPRY domain.

This sequence belongs to the FBXO45/Fsn family. As to quaternary structure, component of an E3 ubiquitin ligase complex composed of hiw and Fsn.

Its subcellular location is the synapse. It participates in protein modification; protein ubiquitination. Required in the presynaptic motoneuron to down-regulate the levels of wnd and restrain synaptic terminal growth at the neuromuscular junction (NMJ). This Drosophila mojavensis (Fruit fly) protein is F-box/SPRY domain-containing protein 1.